We begin with the raw amino-acid sequence, 258 residues long: Serine protease sp-Eoc49 (258 aa).

The N-terminal stretch at 1-18 (MVLIRVLANLLVLQLSYA) is a signal peptide. Residues 25-249 (VVGGGECNRN…YTDWIQSIIA (225 aa)) form the Peptidase S1 domain. Asparagine 44 carries N-linked (GlcNAc...) asparagine glycosylation. A disulfide bridge links cysteine 50 with cysteine 66. Residue histidine 65 is the Charge relay system of the active site. Residues asparagine 79 and asparagine 103 are each glycosylated (N-linked (GlcNAc...) asparagine). The active-site Charge relay system is the aspartate 110. Intrachain disulfides connect cysteine 142–cysteine 210, cysteine 174–cysteine 189, and cysteine 200–cysteine 225. The N-linked (GlcNAc...) asparagine glycan is linked to asparagine 154. Serine 204 (charge relay system) is an active-site residue. An N-linked (GlcNAc...) asparagine glycan is attached at asparagine 251.

Belongs to the peptidase S1 family. Snake venom subfamily. As to quaternary structure, monomer. In terms of tissue distribution, expressed by the venom gland.

The protein localises to the secreted. Snake venom serine protease that may act in the hemostasis system of the prey. The sequence is that of Serine protease sp-Eoc49 from Echis ocellatus (Ocellated saw-scaled viper).